Here is a 759-residue protein sequence, read N- to C-terminus: Short transient receptor potential channel 1 (759 aa).

A disordered region spans residues 1 to 30 (MMAALYPSTDLSGVSSSSLPSSPSSSSPNE). Residues 1 to 311 (MMAALYPSTD…FGQMSGYRRK (311 aa)) lie on the Cytoplasmic side of the membrane. Positions 15-28 (SSSSLPSSPSSSSP) are enriched in low complexity. ANK repeat units lie at residues 46-75 (LNEKLFLLACDKGDYYMVKKILEENSSGDL), 83-109 (LGRNAVTITIENESLDILQLLLDYGCQ), and 124-146 (MDVAPVILAAHRNNYEILTMLLK). Residues His155, Cys159, Cys161, and Cys164 each coordinate Zn(2+). The discontinuously helical intramembrane region spans 312 to 345 (PTCKKIMTVLTVGIFWPVLSLCYLIAPKSQFGRI). Residues 346–352 (IHTPFMK) are Cytoplasmic-facing. Residues 353 to 370 (FIIHGASYFTFLLLLNLY) form a helical membrane-spanning segment. The Extracellular portion of the chain corresponds to 371–388 (SLVYNEDKKNTMGPALER). The chain crosses the membrane as a helical span at residues 389-405 (IDYLLILWIIGMIWSDI). Residues 406–421 (KRLWYEGLEDFLEESR) are Cytoplasmic-facing. The chain crosses the membrane as a helical span at residues 422-441 (NQLSFVMNSLYLATFALKVV). The Extracellular segment spans residues 442 to 462 (AHNKFHDFADRKDWDAFHPTL). Residues 463–483 (VAEGLFAFANVLSYLRLFFMY) traverse the membrane as a helical segment. Topologically, residues 484 to 502 (TTSSILGPLQISMGQMLQD) are cytoplasmic. Residues 503–524 (FGKFLGMFLLVLFSFTIGLTQL) traverse the membrane as a helical segment. The Extracellular segment spans residues 525–589 (YDKGYTSKEQ…GEELQSFVGA (65 aa)). Cys537 and Cys542 are oxidised to a cystine. Residues 590-610 (VIVGTYNVVVVIVLTKLLVAM) form a helical membrane-spanning segment. Over 611–759 (LHKSFQLIAN…SKYAMFYPKN (149 aa)) the chain is Cytoplasmic.

Belongs to the transient receptor (TC 1.A.4) family. STrpC subfamily. TRPC1 sub-subfamily. In terms of assembly, heterotetramer with TRPC4 and/or TRPC5. Forms a heteromeric ion channel with TRPC4, with a 1:3 TRPC1:TRPC4 stoichiometry. Unlike other TRP channel proteins, does not form a homomeric channel. Interacts with TRPC4AP. Interacts with ITPR3. Interacts with MX1 and RNF24. Interacts with FKBP4. Interacts with PLSCR1. Interacts with PKD2L2. Forms a heterotetramer with PKD2 with a 2:2 stoichiometry; has distinct channel properties separate from PKD2 or TRPC1 homomers alone. Post-translationally, activation of PRKCA induces phosphorylation of TRPC1 and subsequent Ca2+ entry into cells. In terms of tissue distribution, expressed in brain, hippocampus, amygdala, Purkinje cells and single neurons in the cortex and striatum.

Its subcellular location is the cell membrane. It catalyses the reaction Ca(2+)(in) = Ca(2+)(out). The catalysed reaction is Na(+)(in) = Na(+)(out). The enzyme catalyses Li(+)(in) = Li(+)(out). It carries out the reaction Cs(+)(in) = Cs(+)(out). With respect to regulation, may be operated by a phosphatidylinositol second messenger system activated by receptor tyrosine kinases or G-protein coupled receptors. Also activated by intracellular calcium store depletion. Its function is as follows. Forms a receptor-activated non-selective calcium permeant cation channel. Forms a heteromeric ion channel with TRPC4 or TRPC5 that has reduced calcium permeability compared to the homomeric TRPC4 or TRPC5 channel. Also permeable to monovalent ions including sodium, lithium and cesium ions. In Rattus norvegicus (Rat), this protein is Short transient receptor potential channel 1 (Trpc1).